We begin with the raw amino-acid sequence, 529 residues long: All-trans-zeta-carotene desaturase (529 aa).

12–45 (IVVGAGPGGLSAAINLAGQGFRVTVVEKDAVPGG) contacts FAD.

It belongs to the carotenoid/retinoid oxidoreductase family. FAD serves as cofactor.

The catalysed reaction is all-trans-zeta-carotene + 2 A = all-trans-lycopene + 2 AH2. It functions in the pathway carotenoid biosynthesis; lycopene biosynthesis. In terms of biological role, dehydrogenates carotenes in the trans conformation: converts all-trans-zeta-carotene into all-trans-lycopene, one of the last dehydrogenation steps of lycopene biosynthesis. In Myxococcus xanthus, this protein is All-trans-zeta-carotene desaturase (carC).